A 420-amino-acid chain; its full sequence is Serine hydroxymethyltransferase (420 aa).

(6S)-5,6,7,8-tetrahydrofolate contacts are provided by residues leucine 121 and 125-127; that span reads GHL. Lysine 229 is modified (N6-(pyridoxal phosphate)lysine).

It belongs to the SHMT family. As to quaternary structure, homodimer. Pyridoxal 5'-phosphate is required as a cofactor.

It is found in the cytoplasm. The enzyme catalyses (6R)-5,10-methylene-5,6,7,8-tetrahydrofolate + glycine + H2O = (6S)-5,6,7,8-tetrahydrofolate + L-serine. Its pathway is one-carbon metabolism; tetrahydrofolate interconversion. The protein operates within amino-acid biosynthesis; glycine biosynthesis; glycine from L-serine: step 1/1. In terms of biological role, catalyzes the reversible interconversion of serine and glycine with tetrahydrofolate (THF) serving as the one-carbon carrier. This reaction serves as the major source of one-carbon groups required for the biosynthesis of purines, thymidylate, methionine, and other important biomolecules. Also exhibits THF-independent aldolase activity toward beta-hydroxyamino acids, producing glycine and aldehydes, via a retro-aldol mechanism. The sequence is that of Serine hydroxymethyltransferase from Glaesserella parasuis serovar 5 (strain SH0165) (Haemophilus parasuis).